Reading from the N-terminus, the 603-residue chain is Phosphoribosylformylglycinamidine synthase subunit PurL (603 aa).

Residue His-32 is part of the active site. Residues Tyr-35 and Lys-68 each contribute to the ATP site. Glu-70 provides a ligand contact to Mg(2+). Substrate contacts are provided by residues Ser-71–His-74 and Arg-93. The Proton acceptor role is filled by His-72. Asp-94 provides a ligand contact to Mg(2+). ATP is bound by residues Asp-107 and Gly-136–Arg-139. Substrate is bound by residues Gly-189 and Gln-208. A Mg(2+)-binding site is contributed by Asp-236. Substrate is bound at residue Glu-280–Gln-282. Positions 388, 429, 442, and 477 each coordinate ATP. Asn-478 is a Mg(2+) binding site. Substrate is bound at residue Ser-480. The ATP site is built by Ser-549 and His-556.

Belongs to the FGAMS family. Monomer. Part of the FGAM synthase complex composed of 1 PurL, 1 PurQ and 2 PurS subunits.

It is found in the cytoplasm. It carries out the reaction N(2)-formyl-N(1)-(5-phospho-beta-D-ribosyl)glycinamide + L-glutamine + ATP + H2O = 2-formamido-N(1)-(5-O-phospho-beta-D-ribosyl)acetamidine + L-glutamate + ADP + phosphate + H(+). The protein operates within purine metabolism; IMP biosynthesis via de novo pathway; 5-amino-1-(5-phospho-D-ribosyl)imidazole from N(2)-formyl-N(1)-(5-phospho-D-ribosyl)glycinamide: step 1/2. Functionally, part of the phosphoribosylformylglycinamidine synthase complex involved in the purines biosynthetic pathway. Catalyzes the ATP-dependent conversion of formylglycinamide ribonucleotide (FGAR) and glutamine to yield formylglycinamidine ribonucleotide (FGAM) and glutamate. The FGAM synthase complex is composed of three subunits. PurQ produces an ammonia molecule by converting glutamine to glutamate. PurL transfers the ammonia molecule to FGAR to form FGAM in an ATP-dependent manner. PurS interacts with PurQ and PurL and is thought to assist in the transfer of the ammonia molecule from PurQ to PurL. In Thermotoga maritima (strain ATCC 43589 / DSM 3109 / JCM 10099 / NBRC 100826 / MSB8), this protein is Phosphoribosylformylglycinamidine synthase subunit PurL.